We begin with the raw amino-acid sequence, 131 residues long: Glycine cleavage system H protein (131 aa).

Residues 24-106 (RVTVGISDHA…YGEGWIFVVE (83 aa)) enclose the Lipoyl-binding domain. An N6-lipoyllysine modification is found at lysine 65.

Belongs to the GcvH family. As to quaternary structure, the glycine cleavage system is composed of four proteins: P, T, L and H. It depends on (R)-lipoate as a cofactor.

The glycine cleavage system catalyzes the degradation of glycine. The H protein shuttles the methylamine group of glycine from the P protein to the T protein. The sequence is that of Glycine cleavage system H protein from Xanthomonas euvesicatoria pv. vesicatoria (strain 85-10) (Xanthomonas campestris pv. vesicatoria).